The following is a 1378-amino-acid chain: MAQTQTFNGRRRVRKFFGKIPEVAEMPNLIEVQKASYDQFLMVDEPKGGRPDEGLQAVFKSVFPISDFSGSSMLEFVKYEFEGPKFDVDECRQRDLTYAAPLKVTLRLIVFDIDEDTGAKSIKDIKEQDVYMGDMPLMTLNGTFIVNGTERVIVSQMHRSPGVFFDHDKGKSHSSGKLLFAARVIPYRGSWLDIEFDSKDVVHARIDRRRKIPVTSLLMALGMDGEEILSTFYNKITYVRAGDHWRIPFNVERFRGLKAVGDLVDADTGEIVVEAGKKITARQARQLGEKGLKAIKATDEDLLGNYLAEDIVNYATGEIFLEAGDEIDEKTLKVLLGTGEQEIKVLDIDHVNVGAYIRNTLNVDKNESRQDALFDIYRVMRPGEPPTLETAEAMFNSLFFDSERYDLSAVGRVKMNMRLELKAEDTVRVLRKEDILAVVKTLVELRDGKGEIDDIDNLGNRRVRSVGELMENQYRVGLLRMERAIKERMSSIEIDTVMPQDLINAKPAAAAVREFFGSSQLSQFMDQTNPLSEITHKRRLSALGPGGLTRERAGFEVRDVHPTHYGRICPIETPEGPNIGLINSLATFARVNKYGFIESPYRKIVDGKLTNDVVYLSAMEEAKHHVAQANAELDKNGGFVDEFVICRSAGEVMMAPRENVDLMDVSPKQMVSVAAALIPFLENDDANRALMGSNMQRQAVPLVRAEAPFVGTGMEPIVARDSGAAIGARRGGIVDQVDATRIVIRATEDLDPGKSGVDIYRLMKFQRSNQNTCINQRPLVRMGDRVNKGDIIADGPSTELGDLALGRNVLVAFMPWNGYNYEDSILLSERIVADDVFTSIHIEEFEVMARDTKLGPEEITRDIPNVSEEALKNLDEAGIVYIGAEVQPGDILVGKITPKGESPMTPEEKLLRAIFGEKASDVRDTSMRMPPGTFGTVVEVRVFNRHGVEKDERAMAIEREEIERLAKDRDDEQAILDRNVYARLSDVLVGKEAIAGPKGFKKGSTLSKDTLDEYPRSQWWQFAVENEKLQSELEALRGQYDDSKKALEQRFMDKVEKVQRGDEMPPGVMKMVKVFVAVKRKMQPGDKMAGRHGNKGVVSRIVPVEDMPFLEDGTHADIVLNPLGVPSRMNVGQILETHLGWACAGMGKKIGELIDTYKAAGDIKPLRKTLESFMPANDRNEPIREYDDESIVRLSEQMRRGVSIATPVFDGAHEADINIMLEQAGLHTSGQSQLYDGRTGEPFDRKVTMGYIYMLKLHHLVDDKIHARSIGPYSLVTQQPLGGKAQFGGQRFGEMEVWALEAYGAAYTLQEMLTVKSDDVAGRTKVYEAIVRGDDTFEAGIPESFNVLVKEMRSLGLNVELENTKLDDAPVRLPDAAE.

It belongs to the RNA polymerase beta chain family. In terms of assembly, the RNAP catalytic core consists of 2 alpha, 1 beta, 1 beta' and 1 omega subunit. When a sigma factor is associated with the core the holoenzyme is formed, which can initiate transcription.

The catalysed reaction is RNA(n) + a ribonucleoside 5'-triphosphate = RNA(n+1) + diphosphate. Functionally, DNA-dependent RNA polymerase catalyzes the transcription of DNA into RNA using the four ribonucleoside triphosphates as substrates. This Mesorhizobium japonicum (strain LMG 29417 / CECT 9101 / MAFF 303099) (Mesorhizobium loti (strain MAFF 303099)) protein is DNA-directed RNA polymerase subunit beta.